The primary structure comprises 120 residues: UPF0231 protein YacL (120 aa).

This sequence belongs to the UPF0231 family.

This Escherichia fergusonii (strain ATCC 35469 / DSM 13698 / CCUG 18766 / IAM 14443 / JCM 21226 / LMG 7866 / NBRC 102419 / NCTC 12128 / CDC 0568-73) protein is UPF0231 protein YacL.